We begin with the raw amino-acid sequence, 106 residues long: Thioredoxin-like protein YdbP (106 aa).

Residues 1–106 (MKKITTNEQF…VTEFLSEHIS (106 aa)) enclose the Thioredoxin domain. The cysteines at positions 29 and 32 are disulfide-linked.

Belongs to the thioredoxin family.

Its function is as follows. Participates in various redox reactions through the reversible oxidation of its active center dithiol to a disulfide and catalyzes dithiol-disulfide exchange reactions. The polypeptide is Thioredoxin-like protein YdbP (ydbP) (Bacillus subtilis (strain 168)).